We begin with the raw amino-acid sequence, 255 residues long: MKFFFFSFINYKVLNDAARPWQIGFQDPATPIMEGIVNLHHDIIFFLIIIIIFVSWILFRTLFLFNSKTNPVAYNFSHGTFIELLWTLTPSLVLIGIAVPSFALLYSIDEIIDPAITIKAVGRQWYWSYEYSDYVNEENEFLAFHSYILPEEDLELGQFRLLEVDNRIIIPVNTHIRIIVTGADVIHSWAVPSLGVKCDAIPGRLNQISFFIKREGIYYGQCSEICGVNHGFMPIVIEAVSFDDYIRWVQNKILD.

At 1–42 the chain is on the mitochondrial intermembrane side; sequence MKFFFFSFINYKVLNDAARPWQIGFQDPATPIMEGIVNLHHD. A helical transmembrane segment spans residues 43-63; the sequence is IIFFLIIIIIFVSWILFRTLF. The Mitochondrial matrix portion of the chain corresponds to 64 to 83; sequence LFNSKTNPVAYNFSHGTFIE. The chain crosses the membrane as a helical span at residues 84 to 104; it reads LLWTLTPSLVLIGIAVPSFAL. The Mitochondrial intermembrane segment spans residues 105–255; it reads LYSIDEIIDP…IRWVQNKILD (151 aa). Cu cation-binding residues include histidine 187, cysteine 222, glutamate 224, cysteine 226, histidine 230, and methionine 233. Residue glutamate 224 coordinates Mg(2+).

The protein belongs to the cytochrome c oxidase subunit 2 family. In terms of assembly, component of the cytochrome c oxidase (complex IV, CIV), a multisubunit enzyme composed of a catalytic core of 3 subunits and several supernumerary subunits. The complex exists as a monomer or a dimer and forms supercomplexes (SCs) in the inner mitochondrial membrane with ubiquinol-cytochrome c oxidoreductase (cytochrome b-c1 complex, complex III, CIII). The cofactor is Cu cation.

Its subcellular location is the mitochondrion inner membrane. The catalysed reaction is 4 Fe(II)-[cytochrome c] + O2 + 8 H(+)(in) = 4 Fe(III)-[cytochrome c] + 2 H2O + 4 H(+)(out). Component of the cytochrome c oxidase, the last enzyme in the mitochondrial electron transport chain which drives oxidative phosphorylation. The respiratory chain contains 3 multisubunit complexes succinate dehydrogenase (complex II, CII), ubiquinol-cytochrome c oxidoreductase (cytochrome b-c1 complex, complex III, CIII) and cytochrome c oxidase (complex IV, CIV), that cooperate to transfer electrons derived from NADH and succinate to molecular oxygen, creating an electrochemical gradient over the inner membrane that drives transmembrane transport and the ATP synthase. Cytochrome c oxidase is the component of the respiratory chain that catalyzes the reduction of oxygen to water. Electrons originating from reduced cytochrome c in the intermembrane space (IMS) are transferred via the dinuclear copper A center (CU(A)) of subunit 2 and heme A of subunit 1 to the active site in subunit 1, a binuclear center (BNC) formed by heme A3 and copper B (CU(B)). The BNC reduces molecular oxygen to 2 water molecules using 4 electrons from cytochrome c in the IMS and 4 protons from the mitochondrial matrix. This Cyanidium caldarium (Red alga) protein is Cytochrome c oxidase subunit 2 (COX2).